The primary structure comprises 294 residues: UDP-3-O-acyl-N-acetylglucosamine deacetylase (294 aa).

3 residues coordinate Zn(2+): His75, His232, and Asp236. Catalysis depends on His259, which acts as the Proton donor.

This sequence belongs to the LpxC family. Zn(2+) serves as cofactor.

It carries out the reaction a UDP-3-O-[(3R)-3-hydroxyacyl]-N-acetyl-alpha-D-glucosamine + H2O = a UDP-3-O-[(3R)-3-hydroxyacyl]-alpha-D-glucosamine + acetate. The protein operates within glycolipid biosynthesis; lipid IV(A) biosynthesis; lipid IV(A) from (3R)-3-hydroxytetradecanoyl-[acyl-carrier-protein] and UDP-N-acetyl-alpha-D-glucosamine: step 2/6. Functionally, catalyzes the hydrolysis of UDP-3-O-myristoyl-N-acetylglucosamine to form UDP-3-O-myristoylglucosamine and acetate, the committed step in lipid A biosynthesis. The sequence is that of UDP-3-O-acyl-N-acetylglucosamine deacetylase from Campylobacter lari (strain RM2100 / D67 / ATCC BAA-1060).